The following is a 273-amino-acid chain: uncharacterized protein (273 aa).

The next 2 helical transmembrane spans lie at 24 to 44 (VGVS…VTIL) and 103 to 123 (IVGP…EAWA). The segment at 132-194 (SDLPHHGRQS…QPPAQTQPYR (63 aa)) is disordered. Residues 164–179 (SSHHIRSPAVARHHKT) show a composition bias toward basic residues. The segment covering 183–192 (TTQPPAQTQP) has biased composition (low complexity).

The protein localises to the cell membrane. This is an uncharacterized protein from Sinorhizobium fredii (strain NBRC 101917 / NGR234).